The primary structure comprises 300 residues: N-acetylmannosamine kinase (300 aa).

Residues 5–12 (ALDIGGTK) and 132–139 (GVGGGIVL) each bind ATP. His156, Cys166, Cys168, and Cys173 together coordinate Zn(2+).

The protein belongs to the ROK (NagC/XylR) family. NanK subfamily. In terms of assembly, homodimer.

The catalysed reaction is an N-acyl-D-mannosamine + ATP = an N-acyl-D-mannosamine 6-phosphate + ADP + H(+). It functions in the pathway amino-sugar metabolism; N-acetylneuraminate degradation; D-fructose 6-phosphate from N-acetylneuraminate: step 2/5. In terms of biological role, catalyzes the phosphorylation of N-acetylmannosamine (ManNAc) to ManNAc-6-P. The sequence is that of N-acetylmannosamine kinase from Haemophilus influenzae (strain PittGG).